The following is a 111-amino-acid chain: Protein BEX5 (111 aa).

Residues 1–12 show a composition bias toward basic and acidic residues; the sequence is MENVPKENKVVE. The interval 1-37 is disordered; that stretch reads MENVPKENKVVEKAPVQNEAPALGGGEYQEPGGNVKG. The segment at 100–104 is his cluster; the sequence is HHDHH. Cys-108 provides a ligand contact to Zn(2+).

It belongs to the BEX family. Ubiquitinated. Degraded by the proteasome.

It is found in the cytoplasm. The chain is Protein BEX5 (BEX5) from Homo sapiens (Human).